The chain runs to 373 residues: MPGWSCLVTGAGGFVGQRIIRMLVQEKELQEVRALDKVFRPETKEEFSKLQTKAKVTMLEGDILDAQYLRRACQGISVVIHTASVMDFSRVLPRQTILDVNLKGTQNLLEAGIHASVPAFIYCSTVDVAGPNSYKKTILNGREEEHHESTWSNPYPYSKKMAEKAVLAANGSILKNGGTLHTCALRPMYIYGERGQFLSRIIIMALKNKGVLNVTGKFSIVNPVYVGNVAWAHILAARGLRDPKKSQNIQGQFYYISDDTPHQSYDDLNCTLSKEWGLRLDSSWSLPLPLLYWLAFLLETVSFLLRPFYNYRPPFNCHLVTLSNSKFTFSYKKAQRDLGYEPLVSWEEAKQKTSEWIGTLVEQHRETLDTKSQ.

Tyrosine 155 serves as the catalytic Proton acceptor. Lysine 159 is an NAD(+) binding site. Residues 288–308 (LPLLYWLAFLLETVSFLLRPF) form a helical membrane-spanning segment.

Belongs to the 3-beta-HSD family. In terms of tissue distribution, adrenal glands, testes and ovaries.

It is found in the endoplasmic reticulum membrane. It localises to the mitochondrion membrane. The enzyme catalyses a 3beta-hydroxy-Delta(5)-steroid + NAD(+) = a 3-oxo-Delta(5)-steroid + NADH + H(+). It carries out the reaction a 3-oxo-Delta(5)-steroid = a 3-oxo-Delta(4)-steroid. It participates in lipid metabolism; steroid biosynthesis. 3-beta-HSD is a bifunctional enzyme, that catalyzes the oxidative conversion of Delta(5)-ene-3-beta-hydroxy steroid, and the oxidative conversion of ketosteroids. The 3-beta-HSD enzymatic system plays a crucial role in the biosynthesis of all classes of hormonal steroids. The chain is 3 beta-hydroxysteroid dehydrogenase/Delta 5--&gt;4-isomerase type 2 (Hsd3b) from Rattus norvegicus (Rat).